Here is a 1126-residue protein sequence, read N- to C-terminus: [F-actin]-monooxygenase mical2 (1126 aa).

Positions 2–494 (GENGDDKHGR…KHLFITNELQ (493 aa)) are monooxygenase domain. Residues cysteine 97, 116–118 (EKR), 123–125 (RNN), phenylalanine 183, tyrosine 299, and aspartate 399 contribute to the FAD site. A Calponin-homology (CH) domain is found at 516 to 619 (DVRPNKLLIW…MVLYLSKFYE (104 aa)). The Nuclear localization signal signature appears at 659 to 680 (RKRVPKDEKTSDDSDLNKRRKT). Disordered stretches follow at residues 748–830 (AVTA…SLSS) and 892–935 (PSLG…SGMS). A compositionally biased stretch (pro residues) spans 792 to 803 (VRPPVQPRPGPA). Positions 805–824 (PTRELRVVERAQSHPDDLGR) are enriched in basic and acidic residues. Low complexity predominate over residues 918 to 932 (SSSDSSPSSAPSRKS). The LIM zinc-binding domain maps to 1001 to 1063 (DTCYFCKRRV…QPHFMHSVTK (63 aa)). The Zn(2+) site is built by cysteine 1003, cysteine 1006, histidine 1024, cysteine 1027, cysteine 1030, cysteine 1033, cysteine 1053, and histidine 1056.

This sequence belongs to the Mical family. It depends on FAD as a cofactor.

It localises to the nucleus. The protein resides in the cytoplasm. It catalyses the reaction L-methionyl-[F-actin] + NADPH + O2 + H(+) = L-methionyl-(R)-S-oxide-[F-actin] + NADP(+) + H2O. In terms of biological role, nuclear monooxygenase that promotes depolymerization of F-actin by mediating oxidation of specific methionine residues on actin and regulates the srf signaling. Acts by modifying nuclear actin subunits through the addition of oxygen to form methionine-sulfoxide, leading to promote actin filament severing and prevent repolymerization. Acts as a key regulator of the srf signaling pathway elicited by nerve growth factor and serum: mediates oxidation and subsequent depolymerization of nuclear actin, leading to increase mkl1/mrtf-a presence in the nucleus and promote srf:mkl1/mrtf-a-dependent gene transcription. This is [F-actin]-monooxygenase mical2 from Xenopus tropicalis (Western clawed frog).